We begin with the raw amino-acid sequence, 198 residues long: uncharacterized protein (198 aa).

The segment at 40–111 (GSALPPQAPT…LSRGAGQGAP (72 aa)) is disordered. A compositionally biased stretch (low complexity) spans 60–74 (SSRTPGPRPPRSTLR).

This is an uncharacterized protein from Homo sapiens (Human).